The sequence spans 212 residues: Pyridoxine/pyridoxamine 5'-phosphate oxidase (212 aa).

Residues 8–11 (RREY) and lysine 66 each bind substrate. FMN is bound by residues 61–66 (RIVLLK), 76–77 (FT), arginine 82, lysine 83, and glutamine 105. Substrate contacts are provided by tyrosine 123, arginine 127, and serine 131. FMN-binding positions include 140 to 141 (QS) and tryptophan 185. 191–193 (RLH) is a binding site for substrate. Residue arginine 195 participates in FMN binding.

Belongs to the pyridoxamine 5'-phosphate oxidase family. As to quaternary structure, homodimer. FMN is required as a cofactor.

The catalysed reaction is pyridoxamine 5'-phosphate + O2 + H2O = pyridoxal 5'-phosphate + H2O2 + NH4(+). The enzyme catalyses pyridoxine 5'-phosphate + O2 = pyridoxal 5'-phosphate + H2O2. Its pathway is cofactor metabolism; pyridoxal 5'-phosphate salvage; pyridoxal 5'-phosphate from pyridoxamine 5'-phosphate: step 1/1. It participates in cofactor metabolism; pyridoxal 5'-phosphate salvage; pyridoxal 5'-phosphate from pyridoxine 5'-phosphate: step 1/1. Catalyzes the oxidation of either pyridoxine 5'-phosphate (PNP) or pyridoxamine 5'-phosphate (PMP) into pyridoxal 5'-phosphate (PLP). This chain is Pyridoxine/pyridoxamine 5'-phosphate oxidase, found in Shewanella baltica (strain OS155 / ATCC BAA-1091).